The following is a 1180-amino-acid chain: IQ domain-containing protein N (1180 aa).

The segment at 34–78 (HPPAPAHPSLLDKMEKAPPQPQHEGLKSKEHLPQQPAEGKTASRR) is disordered. An IQ 1 domain is found at 103–132 (HARAATLIQANWRGYWLRQKLISQMMAAKA). 3 disordered regions span residues 283–324 (RVSA…ETPK), 476–496 (MSKT…PQTR), and 786–820 (QRLG…TQGG). IQ domains follow at residues 926–955 (RILA…GAMV), 956–978 (IQAT…ATTT), 979–1001 (IQSA…MLHP), 1113–1142 (QDKA…AAKI), and 1143–1165 (VQAT…LLGP).

As to quaternary structure, interacts with calmodulin.

In terms of biological role, essential for spermiogenesis and fertilization. May be required for manchette assembly in elongating spermatids. The protein is IQ domain-containing protein N of Homo sapiens (Human).